We begin with the raw amino-acid sequence, 380 residues long: mRNA cap guanine-N(7) methyltransferase (380 aa).

Residues Ser24–Lys333 form the mRNA cap 0 methyltransferase domain. Residue Asn33–Asn34 participates in mRNA binding. Residues Lys37, Ala62, Asp84, Asp117, Gln139, and Tyr144 each contribute to the S-adenosyl-L-methionine site. The disordered stretch occupies residues Glu336 to Asn380.

This sequence belongs to the class I-like SAM-binding methyltransferase superfamily. mRNA cap 0 methyltransferase family.

It is found in the nucleus. It catalyses the reaction a 5'-end (5'-triphosphoguanosine)-ribonucleoside in mRNA + S-adenosyl-L-methionine = a 5'-end (N(7)-methyl 5'-triphosphoguanosine)-ribonucleoside in mRNA + S-adenosyl-L-homocysteine. Functionally, mRNA-capping methyltransferase that methylates the N7 position of the added guanosine to the 5'-cap structure of mRNAs. Binds RNA containing 5'-terminal GpppC. This Caenorhabditis elegans protein is mRNA cap guanine-N(7) methyltransferase (tag-72).